We begin with the raw amino-acid sequence, 505 residues long: MLEIRGLSPSLCLLSLLLVLHGAERSQPPPRRRFEYKLSFKGPRLAVPGAGIPFWSHHGDAILGLEEVRLVPSMKNRSGAVWSNISVSFPSWEVEMQMRVTGPGRRGAQGVAMWYTKDRAQVGSVVEELASWDGIGIYFDSSTSDVQDSPVIRVLASDGHDLQEQSGDGNVRELGSCHRDFRNRPFPFRARVTYWRQRLRVSLSGGLTPKDPEEVCVDVEPLFLAPGGFFGVSAATGTLAADDHDVLSFLTFSLREPGPEETPQPFMEKDQLLLARKLEELKARLALGTREASIPPLNPKAQEEGERFFNLEDTLGRQSQILQALQALSRQMAQAEKHWKQQLGSTVQVRPEGGWNTAKVSTLLYGQRTLIQALQEMREAAARMASGAHVFYLPVGTKHHFFELDHILSLLQKDLRGLVKKTAKAPRPSGWLLGSSTCLHTSIFLFFLLLQTVGFFCYVNFSRQELDKRLQEYLSTGSLSLEPALPITRTIGVLRRQPISPSMQA.

An N-terminal signal peptide occupies residues Met1–Arg25. Over Ser26 to Cys438 the chain is Lumenal. The L-type lectin-like domain occupies Arg32–Leu254. Residue Asn84 is glycosylated (N-linked (GlcNAc...) asparagine). Cys177 and Cys216 are oxidised to a cystine. A helical transmembrane segment spans residues Leu439–Val459. Over Asn460 to Ala505 the chain is Cytoplasmic.

Its subcellular location is the endoplasmic reticulum-Golgi intermediate compartment membrane. The chain is Protein ERGIC-53-like (Lman1l) from Mus musculus (Mouse).